Consider the following 415-residue polypeptide: Protein maelstrom homolog (415 aa).

A DNA-binding region (HMG box) is located at residues 4-73 (KKAARNAYFF…DPDSTSTYND (70 aa)). The interval 367–399 (SSDPKYSTDKSERSSFEPRGVKPYQGPSGGGRG) is disordered. Positions 372 to 386 (YSTDKSERSSFEPRG) are enriched in basic and acidic residues.

It belongs to the maelstrom family.

The protein localises to the cytoplasm. It localises to the nucleus. In terms of biological role, plays a central role during spermatogenesis by repressing transposable elements and preventing their mobilization, which is essential for the germline integrity. Acts via the piRNA metabolic process, which mediates the repression of transposable elements during meiosis by forming complexes composed of piRNAs and Piwi proteins and governs the methylation and subsequent repression of transposons. Its association with piP-bodies suggests a participation in the secondary piRNAs metabolic process. Required for the localization of germ-cell factors to the meiotic nuage. The polypeptide is Protein maelstrom homolog (mael) (Xenopus tropicalis (Western clawed frog)).